The primary structure comprises 274 residues: NAD-dependent protein deacetylase (274 aa).

Positions 1–274 constitute a Deacetylase sirtuin-type domain; the sequence is MDSRMSDLQA…CDEVLAEVVP (274 aa). Residues 26–46 and 104–107 each bind NAD(+); these read GAGCSTASGIPDYRDGQGQWK and QNVD. The active-site Proton acceptor is the histidine 122. Residues cysteine 130, cysteine 133, cysteine 181, and cysteine 184 each contribute to the Zn(2+) site. Residues 221–223, 247–249, and cysteine 265 contribute to the NAD(+) site; these read GSS and NLG.

Belongs to the sirtuin family. Class II subfamily. It depends on Zn(2+) as a cofactor.

The protein resides in the cytoplasm. It carries out the reaction N(6)-acetyl-L-lysyl-[protein] + NAD(+) + H2O = 2''-O-acetyl-ADP-D-ribose + nicotinamide + L-lysyl-[protein]. In terms of biological role, NAD-dependent protein deacetylase which modulates the activities of several enzymes which are inactive in their acetylated form. This chain is NAD-dependent protein deacetylase, found in Bordetella pertussis (strain Tohama I / ATCC BAA-589 / NCTC 13251).